Consider the following 336-residue polypeptide: MGSIKVTVLGAGSWGTALSNLLAQKGVNTVLWGRDSAVIEEINRERENKRYLPGVKISQELIATADLEFALKDANFLVAAVPSQAFRDLLQKIKPYFKPEQILVNTAKGIEEGSLLRMSAVFTEVLPEYRDNYTILSGPSHAEEVGRGIPTAIVVSGYSPEKLYKVQELFSTEYFRVYTNDDLTGVELGGSLKNIIAIASGICTGLGLGDNTRAALVTRGLIEITRLGIKLGAKKETFMGLSGLGDLFVTAGSRHSRNYKAGILIGEGKSLEETQKEINMVVEGIRTTRAAYQLAQRLEVEMPITEALYKVLFAGLPPREGLFGLMTRAKKEELNF.

NADPH-binding residues include serine 13, tryptophan 14, arginine 34, and lysine 108. Sn-glycerol 3-phosphate-binding residues include lysine 108, glycine 138, and serine 140. NADPH is bound at residue alanine 142. Residues lysine 193, aspartate 246, serine 256, arginine 257, and asparagine 258 each coordinate sn-glycerol 3-phosphate. The active-site Proton acceptor is lysine 193. Arginine 257 contributes to the NADPH binding site. Residues valine 281 and glutamate 283 each coordinate NADPH.

It belongs to the NAD-dependent glycerol-3-phosphate dehydrogenase family.

It localises to the cytoplasm. It carries out the reaction sn-glycerol 3-phosphate + NAD(+) = dihydroxyacetone phosphate + NADH + H(+). The catalysed reaction is sn-glycerol 3-phosphate + NADP(+) = dihydroxyacetone phosphate + NADPH + H(+). The protein operates within membrane lipid metabolism; glycerophospholipid metabolism. Catalyzes the reduction of the glycolytic intermediate dihydroxyacetone phosphate (DHAP) to sn-glycerol 3-phosphate (G3P), the key precursor for phospholipid synthesis. The sequence is that of Glycerol-3-phosphate dehydrogenase [NAD(P)+] from Carboxydothermus hydrogenoformans (strain ATCC BAA-161 / DSM 6008 / Z-2901).